The primary structure comprises 254 residues: Imidazole glycerol phosphate synthase subunit HisF (254 aa).

Residues Asp-11 and Asp-130 contribute to the active site.

This sequence belongs to the HisA/HisF family. As to quaternary structure, heterodimer of HisH and HisF.

It is found in the cytoplasm. The catalysed reaction is 5-[(5-phospho-1-deoxy-D-ribulos-1-ylimino)methylamino]-1-(5-phospho-beta-D-ribosyl)imidazole-4-carboxamide + L-glutamine = D-erythro-1-(imidazol-4-yl)glycerol 3-phosphate + 5-amino-1-(5-phospho-beta-D-ribosyl)imidazole-4-carboxamide + L-glutamate + H(+). It functions in the pathway amino-acid biosynthesis; L-histidine biosynthesis; L-histidine from 5-phospho-alpha-D-ribose 1-diphosphate: step 5/9. Functionally, IGPS catalyzes the conversion of PRFAR and glutamine to IGP, AICAR and glutamate. The HisF subunit catalyzes the cyclization activity that produces IGP and AICAR from PRFAR using the ammonia provided by the HisH subunit. This is Imidazole glycerol phosphate synthase subunit HisF from Trichlorobacter lovleyi (strain ATCC BAA-1151 / DSM 17278 / SZ) (Geobacter lovleyi).